Consider the following 351-residue polypeptide: Quinolinate phosphoribosyltransferase [decarboxylating] 2a, mitochondrial (351 aa).

Substrate contacts are provided by residues Arg142, 173–175 (TRK), Arg197, Lys207, Glu240, Asp267, 299–301 (SGN), and 320–322 (SGA).

This sequence belongs to the NadC/ModD family. As to expression, expressed in roots and flowers.

It localises to the mitochondrion. The catalysed reaction is nicotinate beta-D-ribonucleotide + CO2 + diphosphate = quinolinate + 5-phospho-alpha-D-ribose 1-diphosphate + 2 H(+). It functions in the pathway alkaloid biosynthesis; nicotine biosynthesis. The protein operates within cofactor biosynthesis; NAD(+) biosynthesis; nicotinate D-ribonucleotide from quinolinate: step 1/1. In terms of biological role, involved in the biosynthesis of pyridine alkaloid natural products, leading mainly to the production of anabasine, anatabine, nicotine and nornicotine, effective deterrents against herbivores with antiparasitic and pesticide properties (neurotoxins); nornicotine serves as the precursor in the synthesis of the carcinogen compound N'-nitrosonornicotine (NNN). Involved in the catabolism of quinolinic acid (QA). This Nicotiana tabacum (Common tobacco) protein is Quinolinate phosphoribosyltransferase [decarboxylating] 2a, mitochondrial.